The chain runs to 1481 residues: Cystic fibrosis transmembrane conductance regulator (1481 aa).

Over 1–77 (MQRSPLEKAS…KLINALRRCF (77 aa)) the chain is Cytoplasmic. Residues 78 to 98 (FWRFMFYGIILYLGEVTKAVQ) traverse the membrane as a helical segment. The ABC transmembrane type-1 1 domain occupies 81–365 (FMFYGIILYL…WAVQTWYDSL (285 aa)). Over 99–122 (PLLLGRIIASYDPDNKVERSIAIY) the chain is Extracellular. Residues 123–146 (LGIGLCLLFIVRTLLLHPAIFGLH) form a helical membrane-spanning segment. Residues 147–195 (HIGMQMRIAMFSLIYKKTLKLSSRVLDKISIGQLVSLLSNNLNKFDEGL) are Cytoplasmic-facing. A helical transmembrane segment spans residues 196 to 216 (ALAHFVWIAPLQVTLLMGLLW). The Extracellular segment spans residues 217 to 222 (ELLQAF). Residues 223 to 243 (TFCGLAFLIVLALLQAGLGKM) traverse the membrane as a helical segment. Topologically, residues 244-298 (MMKYRDQRAGKINERLVITSEMIENIQSVKAYCWEEAMEKIIENLRQTELKLTRK) are cytoplasmic. A helical membrane pass occupies residues 299-319 (AAYVRYLNSSAFFFSGFFVVF). Residues 320 to 339 (LSVLPYALLKGIILRKIFTT) are Extracellular-facing. Residues 340–358 (ISFCIVLRMAVTRQFPWAV) form a helical membrane-spanning segment. Topologically, residues 359–858 (QTWYDSLGAI…YLRYITVHKS (500 aa)) are cytoplasmic. ATP is bound by residues Trp401, 457–464 (GSTGAGKT), and Gln492. The region spanning 423–645 (NGDNSLFFSN…RPDFSSKLMG (223 aa)) is the ABC transporter 1 domain. Cys523 carries the S-palmitoyl cysteine lipid modification. The residue at position 548 (Ser548) is a Phosphoserine. The tract at residues 653–831 (TAERRNSIIT…EEINEEDLRD (179 aa)) is disordered R region. A phosphoserine; by PKA mark is found at Ser659 and Ser669. Ser685 carries the post-translational modification Phosphoserine; by PKC. Residue Lys687 forms a Glycyl lysine isopeptide (Lys-Gly) (interchain with G-Cter in ubiquitin) linkage. The residue at position 699 (Ser699) is a Phosphoserine; by PKA. Phosphoserine is present on Ser711. At Thr716 the chain carries Phosphothreonine. 2 positions are modified to phosphoserine; by PKA: Ser736 and Ser767. Phosphoserine; by PKC is present on Ser790. Residues Ser795 and Ser813 each carry the phosphoserine; by PKA modification. Residues 859–879 (LMFVLIWCLVVFLVEVAASLV) traverse the membrane as a helical segment. The ABC transmembrane type-1 2 domain maps to 859 to 1155 (LMFVLIWCLV…AVNSSIDVDS (297 aa)). Residues 880–918 (VLCLFPKIFFQDKGNSTKSANNSYAVIITSTSSYYIFYI) are Extracellular-facing. 2 N-linked (GlcNAc...) asparagine glycosylation sites follow: Asn894 and Asn900. The chain crosses the membrane as a discontinuously helical span at residues 919–939 (YVGVADTLLALGLFRGLPLVH). The Cytoplasmic portion of the chain corresponds to 940–990 (TLITVSKTLHHKMLQSVLQAPMSTLNTLKTGGILNRFSKDIAVLDDLLPLT). A helical membrane pass occupies residues 991–1011 (IFDFVQLLLIVIGAVVVVSVL). Over 1012–1013 (QP) the chain is Extracellular. Residues 1014–1034 (YIFLATVPVIAAFILLRAYFL) traverse the membrane as a helical segment. Topologically, residues 1035-1095 (HTSQQLKQLE…TANWFLYLST (61 aa)) are cytoplasmic. The chain crosses the membrane as a helical span at residues 1096–1116 (LRWFQMRIEMIFVIFFIAVTF). Residues 1117–1130 (ISILTTGEGEGRVG) lie on the Extracellular side of the membrane. A helical transmembrane segment spans residues 1131-1151 (IILTLAMNIMGTLQWAVNSSI). Residues 1152 to 1481 (DVDSLMRSVS…TEEEVQETKL (330 aa)) are Cytoplasmic-facing. In terms of domain architecture, ABC transporter 2 spans 1211–1444 (MTVKDLTAKY…KSLFRQAISP (234 aa)). Residues Tyr1220 and 1245 to 1252 (GRTGSGKS) contribute to the ATP site. The tract at residues 1387 to 1481 (RTLKQAFANC…TEEEVQETKL (95 aa)) is interaction with GORASP2. Cys1396 carries S-palmitoyl cysteine lipidation. The segment at 1453–1481 (HRNSSRQRSRSNIAALKEETEEEVQETKL) is disordered. Ser1457 is subject to Phosphoserine. Acidic residues predominate over residues 1471-1481 (ETEEEVQETKL). The short motif at 1479 to 1481 (TKL) is the PDZ-binding element.

Belongs to the ABC transporter superfamily. ABCC family. CFTR transporter (TC 3.A.1.202) subfamily. As to quaternary structure, monomer; does not require oligomerization for channel activity. May form oligomers in the membrane. Interacts with SLC26A3, SLC26A6 and NHERF1. Interacts with SHANK2. Interacts with MYO6. Interacts (via C-terminus) with GOPC (via PDZ domain); this promotes CFTR internalization and thereby decreases channel activity. Interacts with SLC4A7 through NHERF1. Found in a complex with MYO5B and RAB11A. Interacts with ANO1. Interacts with SLC26A8. Interacts with AHCYL1; the interaction increases CFTR activity. Interacts with CSE1L. The core-glycosylated form interacts with GORASP2 (via PDZ GRASP-type 1 domain) in respone to ER stress. Interacts with MARCHF2; the interaction leads to CFTR ubiqtuitination and degradation. Interacts with ADGRG2. Post-translationally, N-glycosylated. Phosphorylated; cAMP treatment promotes phosphorylation and activates the channel. Dephosphorylation decreases the ATPase activity (in vitro). Phosphorylation at PKA sites activates the channel. Phosphorylation at PKC sites enhances the response to phosphorylation by PKA. Phosphorylated by AMPK; this inhibits channel activity. In terms of processing, ubiquitinated, leading to its degradation in the lysosome. Deubiquitination by USP10 in early endosomes enhances its endocytic recycling to the cell membrane. Ubiquitinated by RNF185 during ER stress. Ubiquitinated by MARCHF2.

The protein localises to the apical cell membrane. The protein resides in the early endosome membrane. It localises to the cell membrane. Its subcellular location is the recycling endosome membrane. It is found in the endoplasmic reticulum membrane. The protein localises to the nucleus. It catalyses the reaction ATP + H2O + closed Cl(-) channel = ADP + phosphate + open Cl(-) channel.. It carries out the reaction chloride(in) = chloride(out). The enzyme catalyses hydrogencarbonate(in) = hydrogencarbonate(out). The catalysed reaction is ATP + H2O = ADP + phosphate + H(+). Epithelial ion channel that plays an important role in the regulation of epithelial ion and water transport and fluid homeostasis. Mediates the transport of chloride ions across the cell membrane. Possesses an intrinsic ATPase activity and utilizes ATP to gate its channel; the passive flow of anions through the channel is gated by cycles of ATP binding and hydrolysis by the ATP-binding domains. The ion channel is also permeable to HCO(3)(-); selectivity depends on the extracellular chloride concentration. Exerts its function also by modulating the activity of other ion channels and transporters. Contributes to the regulation of the pH and the ion content of the epithelial fluid layer. Modulates the activity of the epithelial sodium channel (ENaC) complex, in part by regulating the cell surface expression of the ENaC complex. May regulate bicarbonate secretion and salvage in epithelial cells by regulating the transporter SLC4A7. Can inhibit the chloride channel activity of ANO1. Plays a role in the chloride and bicarbonate homeostasis during sperm epididymal maturation and capacitation. This Bos taurus (Bovine) protein is Cystic fibrosis transmembrane conductance regulator.